We begin with the raw amino-acid sequence, 73 residues long: Probable movement protein p8 (73 aa).

The segment covering methionine 1–leucine 12 has biased composition (polar residues). Residues methionine 1 to aspartate 48 are disordered. Over residues glutamate 16–glutamine 27 the composition is skewed to basic and acidic residues.

Belongs to the carmovirus/necrovirus/panicovirus movement protein p8 family.

The protein resides in the host cell wall. Its function is as follows. Cell-to-cell movement. In Muhlenbergia (Blackwell switchgrass), this protein is Probable movement protein p8.